Reading from the N-terminus, the 1225-residue chain is Hybrid signal transduction histidine kinase C (1225 aa).

The chain crosses the membrane as a helical span at residues 8 to 28 (GFLLSTLFFTIISIILFYFFI). Over residues 313-356 (LSPRSLSSSSSSSPSSSNNNGNTNNSGSLSPRSSNSNGSAVSPR) the composition is skewed to low complexity. Residues 313 to 407 (LSPRSLSSSS…SNGTISSPRT (95 aa)) form a disordered region. The segment covering 357–368 (NVSSNSMSPRGQ) has biased composition (polar residues). The segment covering 370–388 (SDRSISSPRGSSSSSSSSS) has biased composition (low complexity). A compositionally biased stretch (polar residues) spans 389 to 407 (NELAISPRNSNGTISSPRT). The Histidine kinase domain occupies 426 to 653 (HLSHELRTPI…TFHFVIPLET (228 aa)). Phosphohistidine; by autocatalysis is present on histidine 429. A Response regulatory 1 domain is found at 669 to 784 (SVLVVDKNPY…HLVACLLASM (116 aa)). Aspartate 721 bears the 4-aspartylphosphate mark. 3 disordered regions span residues 809-832 (NNIN…SVYG), 941-974 (DDDS…DELN), and 1021-1076 (YLSP…PRAP). A compositionally biased stretch (polar residues) spans 945-954 (NNYCNTTGTM). Over residues 1023–1037 (SPRSMNNNNGNNDNG) the composition is skewed to low complexity. Residues 1058-1072 (TSDTSSLAQSPNSLS) are compositionally biased toward polar residues. Residues 1078-1200 (KIMILDDNPV…CLELILRKWE (123 aa)) form the Response regulatory 2 domain. Aspartate 1127 carries the post-translational modification 4-aspartylphosphate.

The protein localises to the membrane. It catalyses the reaction ATP + protein L-histidine = ADP + protein N-phospho-L-histidine.. In terms of biological role, acts in a signal transduction pathway that regulates the slug versus culmination choice. Believed to be the first component of a phosphorelay that couples the sensing of ammonia to the modulation of PKA activity and hence activates culmination and spore germination. Ammonium transporters amtA and amtC are thought to respectively activate and inhibit dhkC phosphorelay. This protein probably undergoes an ATP-dependent autophosphorylation at conserved His residue in the kinase core, and a phosphoryl group is then transferred to a conserved aspartate residue in the receiver domain. The chain is Hybrid signal transduction histidine kinase C (dhkC) from Dictyostelium discoideum (Social amoeba).